The sequence spans 365 residues: MSEADQLKALRVRIDSLDERILDLISERARCAQEVARVKTASWPKAEEAVFYRPEREAWVLKHIMELNKGPLDNEEMARLFREIMSSCLALEQPLRVAYLGPEGTFSQAAALKHFGHSVISKPMAAIDEVFREVVAGAVNFGVVPVENSTEGAVNHTLDSFLEHDIVICGEVELRIHHHLLVGETTKTDRITRIYSHAQSLAQCRKWLDAHYPNVERVAVSSNADAAKRVKSEWNSAAIAGDMAAQLYGLSKLAEKIEDRPVNSTRFLIIGSQEVPPTGDDKTSIIVSMRNKPGALHELLMPFHSNGIDLTRIETRPSRSGKWTYVFFIDCMGHHQDPLIKNVLEKIGHEAVALKVLGSYPKAVL.

In terms of domain architecture, Chorismate mutase spans methionine 1–arginine 96. Substrate-binding residues include arginine 11, arginine 28, lysine 39, and glutamate 57. The 176-residue stretch at valine 97–serine 272 folds into the Prephenate dehydratase domain. Residues serine 284–proline 361 form the ACT domain.

It localises to the cytoplasm. The catalysed reaction is chorismate = prephenate. It catalyses the reaction prephenate + H(+) = 3-phenylpyruvate + CO2 + H2O. It functions in the pathway amino-acid biosynthesis; L-phenylalanine biosynthesis; phenylpyruvate from prephenate: step 1/1. The protein operates within metabolic intermediate biosynthesis; prephenate biosynthesis; prephenate from chorismate: step 1/1. Catalyzes the Claisen rearrangement of chorismate to prephenate and the decarboxylation/dehydration of prephenate to phenylpyruvate. This chain is Bifunctional chorismate mutase/prephenate dehydratase, found in Stutzerimonas stutzeri (Pseudomonas stutzeri).